A 309-amino-acid chain; its full sequence is D-alanine--D-alanine ligase (309 aa).

One can recognise an ATP-grasp domain in the interval 99–304 (KRVLLQAGIP…FPDLVQKIVD (206 aa)). 132–187 (LKELGLPVVIKAPTQGSTIGTFIVREEGELEPAIAGALKYDLSFMAEAYLAGPEIT) lines the ATP pocket. Residues Asp258, Glu271, and Asn273 each contribute to the Mg(2+) site.

The protein belongs to the D-alanine--D-alanine ligase family. It depends on Mg(2+) as a cofactor. The cofactor is Mn(2+).

The protein localises to the cytoplasm. It carries out the reaction 2 D-alanine + ATP = D-alanyl-D-alanine + ADP + phosphate + H(+). It functions in the pathway cell wall biogenesis; peptidoglycan biosynthesis. Its function is as follows. Cell wall formation. The chain is D-alanine--D-alanine ligase from Moorella thermoacetica (strain ATCC 39073 / JCM 9320).